Reading from the N-terminus, the 173-residue chain is Ribosome maturation factor RimM (173 aa).

The 74-residue stretch at Glu92 to Ile165 folds into the PRC barrel domain.

The protein belongs to the RimM family. Binds ribosomal protein uS19.

It localises to the cytoplasm. Its function is as follows. An accessory protein needed during the final step in the assembly of 30S ribosomal subunit, possibly for assembly of the head region. Essential for efficient processing of 16S rRNA. May be needed both before and after RbfA during the maturation of 16S rRNA. It has affinity for free ribosomal 30S subunits but not for 70S ribosomes. This chain is Ribosome maturation factor RimM, found in Bradyrhizobium diazoefficiens (strain JCM 10833 / BCRC 13528 / IAM 13628 / NBRC 14792 / USDA 110).